Here is a 486-residue protein sequence, read N- to C-terminus: Hematopoietic lineage cell-specific protein (486 aa).

The tract at residues 27-66 is involved in HAX-1 binding; sequence FVNDISEKEQRWGAKTIEGSGRTEHINIHQLRNKVSEEHD. Residue lysine 41 is modified to N6-acetyllysine. Cortactin repeat units follow at residues 79–115, 116–152, and 153–189; these read ASHG…SQTD, AARG…SQKD, and YSHG…SQRD. Lysine 123 carries the N6-acetyllysine modification. Tyrosine 140 is subject to Phosphotyrosine. The Cortactin 4; truncated repeat unit spans residues 190 to 212; the sequence is YAKGFGGQYGIQKDRVDKSAVGF. Lysine 192 is modified (N6-acetyllysine). Tyrosine 198 carries the phosphotyrosine modification. Phosphotyrosine; by FGR is present on tyrosine 222. Residues 226-430 form a disordered region; that stretch reads TPIEAASSGA…AGPSAGAGGA (205 aa). 2 stretches are compositionally biased toward basic and acidic residues: residues 240 to 258 and 265 to 276; these read AKFE…EEKA and QQERKAVVKMSR. Lysine 241 carries the N6-acetyllysine modification. A Phosphoserine modification is found at serine 275. At threonine 330 the chain carries Phosphothreonine. Serine 333 is modified (phosphoserine). Over residues 358–367 the composition is skewed to low complexity; it reads VVEEPVYEAA. The span at 368–413 shows a compositional bias: acidic residues; it reads PELEPEPEPDYEPEPETEPDYEDVGELDRQDEDAEGDYEDVLEPED. Phosphotyrosine; by SYK and FES occurs at positions 388 and 405. Residues 429-486 enclose the SH3 domain; the sequence is GAGISAIALYDYQGEGSDELSFDPDDIITDIEMVDEGWWRGQCRGHFGLFPANYVKLL.

In terms of assembly, interacts (via SH2 domain) with FGR. Associates with the SH2 and SH3 domains of LCK. Binding to he LCK SH3 domain occurs constitutively, while binding to the LCK SH2 domain occurs only upon TCR stimulation. A similar binding pattern was observed with LYN, but not with FYN in which the FYN SH2 region associates upon TCR stimulation but the FYN SH3 region does not associate regardless of TCR stimulation. Directly associates with HAX1, through binding to its C-terminal region. Interacts with HS1BP3. Interacts with FES/FPS. Forms a multiprotein complex with LYN and ANKRD54. Phosphorylated by LYN, FYN and FGR after cross-linking of surface IgM on B-cells. Phosphorylation by LYN, FYN and FGR requires prior phosphorylation by SYK. Binds to LCK in vivo, and is tyrosine phosphorylated upon TCR stimulation. Phosphorylated by FES. As to expression, expressed only in tissues and cells of hematopoietic origin.

The protein localises to the mitochondrion. In terms of biological role, substrate of the antigen receptor-coupled tyrosine kinase. Plays a role in antigen receptor signaling for both clonal expansion and deletion in lymphoid cells. May also be involved in the regulation of gene expression. The protein is Hematopoietic lineage cell-specific protein (Hcls1) of Mus musculus (Mouse).